Reading from the N-terminus, the 211-residue chain is FMN-dependent NADH:quinone oxidoreductase 2 (211 aa).

FMN-binding positions include serine 10 and 17–19; that span reads SRS.

This sequence belongs to the azoreductase type 1 family. In terms of assembly, homodimer. It depends on FMN as a cofactor.

The catalysed reaction is 2 a quinone + NADH + H(+) = 2 a 1,4-benzosemiquinone + NAD(+). It carries out the reaction N,N-dimethyl-1,4-phenylenediamine + anthranilate + 2 NAD(+) = 2-(4-dimethylaminophenyl)diazenylbenzoate + 2 NADH + 2 H(+). In terms of biological role, quinone reductase that provides resistance to thiol-specific stress caused by electrophilic quinones. Its function is as follows. Also exhibits azoreductase activity. Catalyzes the reductive cleavage of the azo bond in aromatic azo compounds to the corresponding amines. This chain is FMN-dependent NADH:quinone oxidoreductase 2, found in Listeria monocytogenes serovar 1/2a (strain ATCC BAA-679 / EGD-e).